Here is a 484-residue protein sequence, read N- to C-terminus: Glutamate--tRNA ligase (484 aa).

The short motif at 11–21 (PSPTGLLHIGN) is the 'HIGH' region element. Residues 255-259 (KLSKR) carry the 'KMSKS' region motif. Position 258 (lysine 258) interacts with ATP.

This sequence belongs to the class-I aminoacyl-tRNA synthetase family. Glutamate--tRNA ligase type 1 subfamily. Monomer.

The protein localises to the cytoplasm. The enzyme catalyses tRNA(Glu) + L-glutamate + ATP = L-glutamyl-tRNA(Glu) + AMP + diphosphate. In terms of biological role, catalyzes the attachment of glutamate to tRNA(Glu) in a two-step reaction: glutamate is first activated by ATP to form Glu-AMP and then transferred to the acceptor end of tRNA(Glu). The chain is Glutamate--tRNA ligase from Streptococcus thermophilus (strain CNRZ 1066).